Reading from the N-terminus, the 563-residue chain is Proline--tRNA ligase (563 aa).

Belongs to the class-II aminoacyl-tRNA synthetase family. ProS type 1 subfamily. Homodimer.

It localises to the cytoplasm. The catalysed reaction is tRNA(Pro) + L-proline + ATP = L-prolyl-tRNA(Pro) + AMP + diphosphate. In terms of biological role, catalyzes the attachment of proline to tRNA(Pro) in a two-step reaction: proline is first activated by ATP to form Pro-AMP and then transferred to the acceptor end of tRNA(Pro). As ProRS can inadvertently accommodate and process non-cognate amino acids such as alanine and cysteine, to avoid such errors it has two additional distinct editing activities against alanine. One activity is designated as 'pretransfer' editing and involves the tRNA(Pro)-independent hydrolysis of activated Ala-AMP. The other activity is designated 'posttransfer' editing and involves deacylation of mischarged Ala-tRNA(Pro). The misacylated Cys-tRNA(Pro) is not edited by ProRS. The sequence is that of Proline--tRNA ligase from Persephonella marina (strain DSM 14350 / EX-H1).